Here is a 386-residue protein sequence, read N- to C-terminus: Antilisterial bacteriocin subtilosin biosynthesis protein AlbE (386 aa).

Its function is as follows. Involved in the production of the bacteriocin subtilosin. The protein is Antilisterial bacteriocin subtilosin biosynthesis protein AlbE (albE) of Bacillus subtilis.